A 191-amino-acid polypeptide reads, in one-letter code: ECF RNA polymerase sigma-E factor (191 aa).

The segment at 1–153 (MSEQLTDQVL…MAITLRELDG (153 aa)) is binds RNAP core. Positions 25–92 (LVVRYQHKVA…KNYLVAQGRR (68 aa)) are sigma-70 factor domain-2. A Polymerase core binding motif is present at residues 48–61 (DVVQESFIKAYRAL). Positions 129–180 (QIVFRTIESLPEDLRMAITLRELDGLSYEEIAAIMDCPVGTVRSRIFRAREA) are sigma-70 factor domain-4. The H-T-H motif DNA-binding region spans 156 to 175 (YEEIAAIMDCPVGTVRSRIF).

Belongs to the sigma-70 factor family. ECF subfamily. In terms of assembly, interacts transiently with the RNAP catalytic core formed by RpoA, RpoB, RpoC and RpoZ (2 alpha, 1 beta, 1 beta' and 1 omega subunit) to form the RNAP holoenzyme that can initiate transcription. Interacts 1:1 with anti-sigma-E factor RseA which prevents binding to RNAP catalytic core.

It localises to the cytoplasm. ECF sigma-E is held in an inactive form by its cognate anti-sigma factor (RseA) until released by regulated intramembrane proteolysis (RIP). RIP occurs when an extracytoplasmic signal (periplasmic, acid or heat stress) triggers a concerted proteolytic cascade to transmit information and elicit cellular responses. In S.typhimurium there are 2 cascades, the heat shock response which depends on DegS and RseP, and acid response which depends only on RseP. The anti-sigma factor RseA is an inner membrane protein, binding sigma-E in the cytoplasm and RseB in the periplasm. RseA is first cut extracytoplasmically (site-1 protease, S1P, by DegS), then within the membrane itself (site-2 protease, S2P, by RseP), while cytoplasmic proteases (predominantly ClpX-ClpP) finish degrading the regulatory protein, liberating sigma-E. Degradation of RseA requires 2 signals to activate DegS; an outer membrane protein (OMP) signal activates DegS, while an LPS signal causes release of RseB from RseA, freeing RseA to be cleaved. OMP stress can be abrogated by overexpression of the sRNA rybB. In terms of biological role, sigma factors are initiation factors that promote the attachment of RNA polymerase (RNAP) to specific initiation sites and are then released. Extracytoplasmic function (ECF) sigma-E controls the envelope stress response, responding to periplasmic protein stress, increased levels of periplasmic lipopolysaccharide (LPS) as well as acid stress, heat shock and oxidative stress; it controls protein processing in the extracytoplasmic compartment. This is ECF RNA polymerase sigma-E factor (rpoE) from Salmonella typhimurium (strain 14028s / SGSC 2262).